Consider the following 95-residue polypeptide: Large ribosomal subunit protein uL23c (95 aa).

This sequence belongs to the universal ribosomal protein uL23 family. Part of the 50S ribosomal subunit.

Its subcellular location is the plastid. It is found in the chloroplast. Its function is as follows. Binds to 23S rRNA. The sequence is that of Large ribosomal subunit protein uL23c (rpl23) from Guillardia theta (Cryptophyte).